The following is a 1174-amino-acid chain: Male determiner protein Mdmd(II) (1174 aa).

Positions Met1 to Pro15 are enriched in basic and acidic residues. 3 disordered regions span residues Met1–Arg51, Lys80–Glu109, and Lys136–Ser259. Over residues Ser16–Ser35 the composition is skewed to low complexity. Residues Lys36–Leu47 show a composition bias toward polar residues. Residues Lys80–Ser92 show a composition bias toward basic and acidic residues. Residues Ile93–Asp102 are compositionally biased toward polar residues. The segment covering Leu138–Ser153 has biased composition (low complexity). Over residues His183–Asn200 the composition is skewed to basic and acidic residues. The segment covering Arg201–Glu223 has biased composition (basic residues). Basic and acidic residues predominate over residues Arg235–Ser259. The MIF4G domain maps to Lys348–Gly531. A compositionally biased stretch (low complexity) spans Asp597 to Ser608. The disordered stretch occupies residues Asp597–Asp616. The MI domain occupies Ala641–Leu757. Residues Ser840–Pro857 show a composition bias toward low complexity. 2 disordered regions span residues Ser840 to Lys1045 and Arg1095 to Arg1133. A compositionally biased stretch (basic residues) spans Lys869–Lys909. Positions Arg910–Leu924 are enriched in basic and acidic residues. Residues Ser926–Asp957 are compositionally biased toward low complexity. Residues Lys963–Lys1001 show a composition bias toward basic residues. A compositionally biased stretch (low complexity) spans Ser1010 to Ser1020. Positions Arg1034–Lys1045 are enriched in basic residues. Residues Arg1095–Arg1118 are compositionally biased toward basic and acidic residues. Positions Arg1119–Asn1130 are enriched in basic residues.

This sequence belongs to the CWC22 family. Component of the spliceosome C complex.

The protein localises to the nucleus speckle. Male determiner protein (M-factor) that controls male somatic sexual differentiation. Acts as a dominant factor that regulates the mRNA splicing of transformer (tra) and doublesex (dsx) transcripts and promotes expression of male splice forms of tra and dsx. Probably acts as a component of the spliceosome C complex required for mRNA splicing factor and exon-junction complex (EJC) assembly. Hinders eIF4AIII from non-specifically binding RNA and escorts it to the splicing machinery to promote EJC assembly on mature mRNAs. This Musca domestica (House fly) protein is Male determiner protein Mdmd(II).